We begin with the raw amino-acid sequence, 369 residues long: 3-dehydroquinate synthase (369 aa).

Residues 71–76 (DGECHK), 105–109 (GVIND), 129–130 (TT), lysine 142, lysine 151, and 169–172 (TLST) each bind NAD(+). Residues glutamate 184, histidine 247, and histidine 264 each coordinate Zn(2+).

This sequence belongs to the sugar phosphate cyclases superfamily. Dehydroquinate synthase family. It depends on Co(2+) as a cofactor. Zn(2+) is required as a cofactor. NAD(+) serves as cofactor.

It is found in the cytoplasm. The catalysed reaction is 7-phospho-2-dehydro-3-deoxy-D-arabino-heptonate = 3-dehydroquinate + phosphate. The protein operates within metabolic intermediate biosynthesis; chorismate biosynthesis; chorismate from D-erythrose 4-phosphate and phosphoenolpyruvate: step 2/7. In terms of biological role, catalyzes the conversion of 3-deoxy-D-arabino-heptulosonate 7-phosphate (DAHP) to dehydroquinate (DHQ). This chain is 3-dehydroquinate synthase, found in Dichelobacter nodosus (strain VCS1703A).